A 325-amino-acid polypeptide reads, in one-letter code: tRNA U34 carboxymethyltransferase (325 aa).

Carboxy-S-adenosyl-L-methionine is bound by residues lysine 91, tryptophan 105, lysine 110, glycine 130, 152-154, 181-182, methionine 197, tyrosine 201, and arginine 316; these read DPS and ME.

The protein belongs to the class I-like SAM-binding methyltransferase superfamily. CmoB family. Homotetramer.

The enzyme catalyses carboxy-S-adenosyl-L-methionine + 5-hydroxyuridine(34) in tRNA = 5-carboxymethoxyuridine(34) in tRNA + S-adenosyl-L-homocysteine + H(+). Catalyzes carboxymethyl transfer from carboxy-S-adenosyl-L-methionine (Cx-SAM) to 5-hydroxyuridine (ho5U) to form 5-carboxymethoxyuridine (cmo5U) at position 34 in tRNAs. The polypeptide is tRNA U34 carboxymethyltransferase (Saccharophagus degradans (strain 2-40 / ATCC 43961 / DSM 17024)).